An 81-amino-acid polypeptide reads, in one-letter code: Putative membrane protein insertion efficiency factor (81 aa).

A disordered region spans residues 61–81; the sequence is NDGGFDPVPPAPSSRTSSIAE.

This sequence belongs to the UPF0161 family.

The protein localises to the cell inner membrane. Its function is as follows. Could be involved in insertion of integral membrane proteins into the membrane. The polypeptide is Putative membrane protein insertion efficiency factor (Pseudomonas entomophila (strain L48)).